A 186-amino-acid polypeptide reads, in one-letter code: Putative 3-methyladenine DNA glycosylase (186 aa).

The protein belongs to the DNA glycosylase MPG family.

The polypeptide is Putative 3-methyladenine DNA glycosylase (Borreliella burgdorferi (strain ATCC 35210 / DSM 4680 / CIP 102532 / B31) (Borrelia burgdorferi)).